A 504-amino-acid polypeptide reads, in one-letter code: MGPGSQQKSEKLRSKSPLADMDGLHAQYVMLETIGHGGCATVKLAQHRLTGTHVAVKTIRKREYWCNRVISEVELLMMADHPNIISLLQVIETKKKVYLIMELCKGKSLYQHIRKAGYLQEHEARALFKQLLSAMNYCHNQGIVHRDLKPDNIMVEKDGKVKIIDFGLGTKVKPGQKLNLFCGTYPFSAPEVLLSTPYDGPKIDVWTLGVVLYFMVTGKIPFDACSIKKLVKRILAGKYSIPSRLSAELQDLLSLLMTANPKLRPTVAEVMVHPWVTEGSGVFPDPCEEQTPLKPDPAIVKAMGHIGFQAQDIEDSLRQRKFNQTMASYCLLKKQILKECDRPTRARPVNPSVTPFPSLVDTATTRLGLRRRENEPTCPWSSANRQVSVCGKSTSKKRDRRVSWPSVLGRPRHTAPTMDHTRTRTRSVPCICSMFCTVQPNSSEESTQGHTRASAADKPVHSRGWPRGIKGWTRMIGNAMRKLCCCIPSKETSHLGQNRVSPKK.

The region spanning 28-276 (YVMLETIGHG…VAEVMVHPWV (249 aa)) is the Protein kinase domain. ATP contacts are provided by residues 34 to 42 (IGHGGCATV) and Lys57. The active-site Proton acceptor is the Asp147. The UBA domain maps to 294-334 (KPDPAIVKAMGHIGFQAQDIEDSLRQRKFNQTMASYCLLKK). Disordered regions lie at residues 389–421 (VCGK…MDHT) and 441–468 (NSSE…WPRG). The segment covering 441-451 (NSSEESTQGHT) has biased composition (polar residues).

This sequence belongs to the protein kinase superfamily. CAMK Ser/Thr protein kinase family. Smok subfamily. Testis-specific. Expressed in the testis from 22 days postpartum (22 dpp).

It carries out the reaction L-seryl-[protein] + ATP = O-phospho-L-seryl-[protein] + ADP + H(+). It catalyses the reaction L-threonyl-[protein] + ATP = O-phospho-L-threonyl-[protein] + ADP + H(+). May play a role in sperm motility, especially in the regulation of flagellar function. The chain is Sperm motility kinase 3A from Mus musculus (Mouse).